Consider the following 120-residue polypeptide: NAD(P)H-quinone oxidoreductase subunit 3, chloroplastic (120 aa).

3 helical membrane passes run 14-34 (LIIS…LAPI), 64-84 (MFAL…PWAM), and 88-108 (VLGV…IVGS).

The protein belongs to the complex I subunit 3 family. In terms of assembly, NDH is composed of at least 16 different subunits, 5 of which are encoded in the nucleus.

The protein localises to the plastid. It localises to the chloroplast thylakoid membrane. It catalyses the reaction a plastoquinone + NADH + (n+1) H(+)(in) = a plastoquinol + NAD(+) + n H(+)(out). It carries out the reaction a plastoquinone + NADPH + (n+1) H(+)(in) = a plastoquinol + NADP(+) + n H(+)(out). Its function is as follows. NDH shuttles electrons from NAD(P)H:plastoquinone, via FMN and iron-sulfur (Fe-S) centers, to quinones in the photosynthetic chain and possibly in a chloroplast respiratory chain. The immediate electron acceptor for the enzyme in this species is believed to be plastoquinone. Couples the redox reaction to proton translocation, and thus conserves the redox energy in a proton gradient. The chain is NAD(P)H-quinone oxidoreductase subunit 3, chloroplastic from Cicer arietinum (Chickpea).